A 171-amino-acid chain; its full sequence is MVVAVYPGTFDPLTRGHEDLVRRASSIFDTLVVGVADSRNKKPFFTLEERLDIAHEVLGHYPNVQVMSFKGLLKDFVRTNNARVIVRGLRAVSDFEYEFQMAGMNRYLLPDVETMFMTPSDQYQFISGTIVREIAQLGGDVSKFVFPSVEKWLTEKVAAMDPASGASAGQP.

Thr-9 is a binding site for substrate. Residues 9-10 and His-17 contribute to the ATP site; that span reads TF. Substrate-binding residues include Lys-41, Leu-73, and Arg-87. Residues 88–90, Glu-98, and 123–129 contribute to the ATP site; these read GLR and YQFISGT.

The protein belongs to the bacterial CoaD family. As to quaternary structure, homohexamer. Mg(2+) serves as cofactor.

The protein localises to the cytoplasm. It catalyses the reaction (R)-4'-phosphopantetheine + ATP + H(+) = 3'-dephospho-CoA + diphosphate. Its pathway is cofactor biosynthesis; coenzyme A biosynthesis; CoA from (R)-pantothenate: step 4/5. Functionally, reversibly transfers an adenylyl group from ATP to 4'-phosphopantetheine, yielding dephospho-CoA (dPCoA) and pyrophosphate. This is Phosphopantetheine adenylyltransferase from Paraburkholderia phytofirmans (strain DSM 17436 / LMG 22146 / PsJN) (Burkholderia phytofirmans).